We begin with the raw amino-acid sequence, 145 residues long: 3-hydroxyacyl-[acyl-carrier-protein] dehydratase FabZ (145 aa).

The active site involves His49.

The protein belongs to the thioester dehydratase family. FabZ subfamily.

It localises to the cytoplasm. It carries out the reaction a (3R)-hydroxyacyl-[ACP] = a (2E)-enoyl-[ACP] + H2O. Functionally, involved in unsaturated fatty acids biosynthesis. Catalyzes the dehydration of short chain beta-hydroxyacyl-ACPs and long chain saturated and unsaturated beta-hydroxyacyl-ACPs. This Ehrlichia ruminantium (strain Welgevonden) protein is 3-hydroxyacyl-[acyl-carrier-protein] dehydratase FabZ.